The following is a 427-amino-acid chain: Nucleolar and spindle-associated protein 1 (427 aa).

Positions 41–190 are disordered; that stretch reads AHLNPETRKE…LGNNKRTSAT (150 aa). Over residues 43–55 the composition is skewed to basic and acidic residues; that stretch reads LNPETRKENKNQD. A compositionally biased stretch (basic residues) spans 83 to 96; that stretch reads TKTRRRRRKKHKTI. The span at 119–128 shows a compositional bias: low complexity; it reads NFQNQENQEN. S139 carries the post-translational modification Phosphoserine. The segment covering 159-179 has biased composition (basic and acidic residues); that stretch reads NDIKDSKKPLEKRSLCTDEFS. Residues 181 to 190 show a composition bias toward polar residues; sequence LGNNKRTSAT. The residue at position 191 (T191) is a Phosphothreonine. The disordered stretch occupies residues 235 to 312; the sequence is IVTPVPPRGR…QAVFRTPKSK (78 aa). The interval 243 to 367 is interaction with microtubules; that stretch reads GRLSVPCTPA…HKGKLKPWGQ (125 aa). A Phosphoserine modification is found at S246. T250 is subject to Phosphothreonine. Residues 252-264 show a composition bias toward polar residues; the sequence is ARQQCPQGHSATK. S261 bears the Phosphoserine mark. Residues T323 and T334 each carry the phosphothreonine modification. Residues S337 and S348 each carry the phosphoserine modification. The segment at 354 to 427 is disordered; that stretch reads NYKPHKGKLK…RRNLGVTKAQ (74 aa). Residues 369–375 carry the KEN box motif; that stretch reads KENNSLN. Residues 393-425 are a coiled coil; sequence LQTREERWKRQEQERKEKKEKLLEARRNLGVTK. Positions 394 to 419 are enriched in basic and acidic residues; sequence QTREERWKRQEQERKEKKEKLLEARR.

Belongs to the NUSAP family. As to quaternary structure, interacts with DNA and microtubules. Microtubule bundling is inhibited by IPO7, KPNA2 and KPNB1 while association with DNA is also inhibited by IPO7 and KPNA2. Post-translationally, ubiquitinated. Ubiquitination by FZR1 may lead to proteasome-dependent degradation of this protein.

Its subcellular location is the cytoplasm. It is found in the nucleus. The protein resides in the nucleolus. It localises to the cytoskeleton. The protein localises to the spindle. Its subcellular location is the chromosome. Microtubule-associated protein with the capacity to bundle and stabilize microtubules. May associate with chromosomes and promote the organization of mitotic spindle microtubules around them. The protein is Nucleolar and spindle-associated protein 1 (Nusap1) of Mus musculus (Mouse).